The following is a 590-amino-acid chain: Cytidine monophosphate-N-acetylneuraminic acid hydroxylase (590 aa).

Positions L14–L112 constitute a Rieske domain. Residues C54, H56, C75, and H78 each coordinate [2Fe-2S] cluster.

This sequence belongs to the CMP-Neu5Ac hydroxylase family. It depends on [2Fe-2S] cluster as a cofactor.

Its subcellular location is the cytoplasm. The enzyme catalyses CMP-N-acetyl-beta-neuraminate + 2 Fe(II)-[cytochrome b5] + O2 + 2 H(+) = CMP-N-glycoloyl-beta-neuraminate + 2 Fe(III)-[cytochrome b5] + H2O. It participates in amino-sugar metabolism; N-acetylneuraminate metabolism. Functionally, sialic acids are components of carbohydrate chains of glycoconjugates and are involved in cell-cell recognition and cell-pathogen interactions. Catalyzes the conversion of CMP-N-acetylneuraminic acid (CMP-Neu5Ac) into its hydroxylated derivative CMP-N-glycolylneuraminic acid (CMP-Neu5Gc), a sialic acid abundantly expressed at the surface of many cells. This Macaca mulatta (Rhesus macaque) protein is Cytidine monophosphate-N-acetylneuraminic acid hydroxylase (CMAH).